A 188-amino-acid polypeptide reads, in one-letter code: Apolipoprotein M (188 aa).

The not cleaved signal peptide spans 1 to 22 (MFHQIWAALLYLYGILLNSIYQ). 3 cysteine pairs are disulfide-bonded: Cys-23/Cys-167, Cys-95/Cys-183, and Cys-128/Cys-157. The tetradecanoate site is built by Glu-136 and Arg-143.

It belongs to the calycin superfamily. Lipocalin family. Highly divergent. As to quaternary structure, interacts with LRP2; LRP2 mediates APOM renal uptake and subsequent lysosomal degradation.

The protein resides in the secreted. Its function is as follows. Probably involved in lipid transport. Can bind sphingosine-1-phosphate, myristic acid, palmitic acid and stearic acid, retinol, all-trans-retinoic acid and 9-cis-retinoic acid. The chain is Apolipoprotein M (APOM) from Sus scrofa (Pig).